A 309-amino-acid chain; its full sequence is Formamidopyrimidine-DNA glycosylase (309 aa).

The active-site Schiff-base intermediate with DNA is the proline 2. Glutamate 3 functions as the Proton donor in the catalytic mechanism. Catalysis depends on lysine 56, which acts as the Proton donor; for beta-elimination activity. Residues histidine 106 and arginine 129 each contribute to the DNA site. The FPG-type zinc-finger motif lies at 271 to 305; the sequence is NVYGRQGNACPHCESTLENIKLNGRASVYCPLCQP. Arginine 295 (proton donor; for delta-elimination activity) is an active-site residue.

It belongs to the FPG family. As to quaternary structure, monomer. Zn(2+) is required as a cofactor.

It carries out the reaction Hydrolysis of DNA containing ring-opened 7-methylguanine residues, releasing 2,6-diamino-4-hydroxy-5-(N-methyl)formamidopyrimidine.. The enzyme catalyses 2'-deoxyribonucleotide-(2'-deoxyribose 5'-phosphate)-2'-deoxyribonucleotide-DNA = a 3'-end 2'-deoxyribonucleotide-(2,3-dehydro-2,3-deoxyribose 5'-phosphate)-DNA + a 5'-end 5'-phospho-2'-deoxyribonucleoside-DNA + H(+). Its function is as follows. Involved in base excision repair of DNA damaged by oxidation or by mutagenic agents. Acts as a DNA glycosylase that recognizes and removes damaged bases. Has a preference for oxidized purines, such as 7,8-dihydro-8-oxoguanine (8-oxoG). Has AP (apurinic/apyrimidinic) lyase activity and introduces nicks in the DNA strand. Cleaves the DNA backbone by beta-delta elimination to generate a single-strand break at the site of the removed base with both 3'- and 5'-phosphates. This is Formamidopyrimidine-DNA glycosylase from Psychrobacter arcticus (strain DSM 17307 / VKM B-2377 / 273-4).